The chain runs to 684 residues: Probable phosphoenolpyruvate synthase (684 aa).

Residue histidine 424 is the Tele-phosphohistidine intermediate of the active site. Residues arginine 517, arginine 564, and glutamate 661 each coordinate substrate. Glutamate 661 provides a ligand contact to Mg(2+).

This sequence belongs to the PEP-utilizing enzyme family. Mg(2+) serves as cofactor.

It catalyses the reaction pyruvate + ATP + H2O = phosphoenolpyruvate + AMP + phosphate + 2 H(+). It functions in the pathway carbohydrate biosynthesis; gluconeogenesis. Functionally, catalyzes the phosphorylation of pyruvate to phosphoenolpyruvate. The sequence is that of Probable phosphoenolpyruvate synthase (ppsA) from Methanothermobacter thermautotrophicus (strain ATCC 29096 / DSM 1053 / JCM 10044 / NBRC 100330 / Delta H) (Methanobacterium thermoautotrophicum).